Here is a 922-residue protein sequence, read N- to C-terminus: Translation initiation factor IF-2 (922 aa).

A disordered region spans residues 33-310 (KTASSTVQPP…SKRQKRNEYE (278 aa)). The segment covering 75-87 (PAAKAAPKAAAKP) has biased composition (low complexity). 2 stretches are compositionally biased toward pro residues: residues 88-98 (GPKPGPKPGPQ) and 140-150 (TPKPGAKPGPK). Low complexity-rich tracts occupy residues 151 to 169 (PGGAKPGAKPGPKPGGRAP) and 202 to 211 (PGSRPGGAKK). Gly residues-rich tracts occupy residues 215–225 (KPGGAKQGGGR) and 248–292 (FGGG…GRPG). The segment covering 296–305 (RKGRKSKRQK) has biased composition (basic residues). The tr-type G domain occupies 418–590 (QRPPVVTVMG…VLLTADASLD (173 aa)). The interval 427-434 (GHVDHGKT) is G1. 427 to 434 (GHVDHGKT) serves as a coordination point for GTP. The segment at 452 to 456 (GITQH) is G2. Positions 477-480 (DTPG) are G3. Residues 477–481 (DTPGH) and 531–534 (NKID) each bind GTP. The interval 531–534 (NKID) is G4. A G5 region spans residues 567–569 (SAK).

Belongs to the TRAFAC class translation factor GTPase superfamily. Classic translation factor GTPase family. IF-2 subfamily.

Its subcellular location is the cytoplasm. Functionally, one of the essential components for the initiation of protein synthesis. Protects formylmethionyl-tRNA from spontaneous hydrolysis and promotes its binding to the 30S ribosomal subunits. Also involved in the hydrolysis of GTP during the formation of the 70S ribosomal complex. This is Translation initiation factor IF-2 from Corynebacterium jeikeium (strain K411).